A 260-amino-acid chain; its full sequence is Trans-aconitate 2-methyltransferase (260 aa).

This sequence belongs to the methyltransferase superfamily. Tam family.

Its subcellular location is the cytoplasm. It carries out the reaction trans-aconitate + S-adenosyl-L-methionine = (E)-3-(methoxycarbonyl)pent-2-enedioate + S-adenosyl-L-homocysteine. Functionally, catalyzes the S-adenosylmethionine monomethyl esterification of trans-aconitate. This is Trans-aconitate 2-methyltransferase from Paracidovorax citrulli (strain AAC00-1) (Acidovorax citrulli).